The following is a 379-amino-acid chain: MSMAPIVLAAGGTGGHLFPAEALARELLERGHRVVLVTDVRGTAFGDALREVPVHRIRSATLGGGLLGKARTALELGIGTLQARRLLSRLEPAIVVGFGGYPSFPAVYAAAGLRIPVAIHEQNAVMGRANRMLARRARLICTSFPEVQGMDNVDRARAVRTGNPVRPAVLALRDRPYEAPLPGGSLDILVTGGSQGATVFGEIVPRAVAMLPEDLRLRLGIVQQARAENLQAARDGYAALGVQATLAPFFRDLPERLARCHLMIGRAGASTVAELTVAGRPSILVPYPHATDDHQTANARAVAAAGGAWIMPQPEFTAEALAARLTALLTDPAPLAPAAAAAAAWGLPDAARRLADAVLGAAGLGNGRSTPDSQMRAAE.

UDP-N-acetyl-alpha-D-glucosamine is bound by residues 13–15 (TGG), Asn-123, Arg-166, Ser-194, and Gln-295.

The protein belongs to the glycosyltransferase 28 family. MurG subfamily.

It localises to the cell inner membrane. It carries out the reaction di-trans,octa-cis-undecaprenyl diphospho-N-acetyl-alpha-D-muramoyl-L-alanyl-D-glutamyl-meso-2,6-diaminopimeloyl-D-alanyl-D-alanine + UDP-N-acetyl-alpha-D-glucosamine = di-trans,octa-cis-undecaprenyl diphospho-[N-acetyl-alpha-D-glucosaminyl-(1-&gt;4)]-N-acetyl-alpha-D-muramoyl-L-alanyl-D-glutamyl-meso-2,6-diaminopimeloyl-D-alanyl-D-alanine + UDP + H(+). It functions in the pathway cell wall biogenesis; peptidoglycan biosynthesis. Its function is as follows. Cell wall formation. Catalyzes the transfer of a GlcNAc subunit on undecaprenyl-pyrophosphoryl-MurNAc-pentapeptide (lipid intermediate I) to form undecaprenyl-pyrophosphoryl-MurNAc-(pentapeptide)GlcNAc (lipid intermediate II). In Rhodospirillum centenum (strain ATCC 51521 / SW), this protein is UDP-N-acetylglucosamine--N-acetylmuramyl-(pentapeptide) pyrophosphoryl-undecaprenol N-acetylglucosamine transferase.